The following is a 1444-amino-acid chain: Bromodomain-containing protein 4 (1444 aa).

Disordered regions lie at residues 1-44, 154-217, 279-362, 492-523, 540-645, 722-986, and 1020-1422; these read MGDG…PKRQ, VEIS…PQPI, AAPP…KQQE, PVMA…ERAQ, AALS…GGAA, CLRK…SSQP, and TSLM…RREA. The span at 11-27 shows a compositional bias: low complexity; the sequence is SGSSSSQGQPSSQAPSS. In terms of domain architecture, Bromo 1 spans 43 to 149; it reads RQTNQLQYLL…KVFLTKISEM (107 aa). Positions 186–196 are enriched in polar residues; it reads ASPQTRGLSNL. A compositionally biased stretch (pro residues) spans 206 to 216; it reads PQGPPTLPPQP. The span at 303–319 shows a compositional bias: polar residues; that stretch reads TTTPTANDQLNESSPAE. Over residues 327–347 the composition is skewed to basic and acidic residues; the sequence is PRRDNTRPSKLPKKEAPDSQH. The 110-residue stretch at 358 to 467 folds into the Bromo 2 domain; the sequence is PKQQEQLRYC…DVFEMRFAKM (110 aa). A compositionally biased stretch (low complexity) spans 498–511; it reads SSSDTSSDSSSESE. Positions 498 to 517 are NPS region; sequence SSSDTSSDSSSESESSTDDS. The BID region stretch occupies residues 538 to 610; it reads QLAALSQPQA…SKKLSKKEGG (73 aa). Over residues 549 to 569 the composition is skewed to basic residues; that stretch reads KPKKKEKEKKEKKKDKHKKKA. The NET domain maps to 633–730; the sequence is DTEEDLGLTG…SCLRKKKKPA (98 aa). Low complexity-rich tracts occupy residues 746–760, 800–823, 919–954, and 1036–1046; these read GTSS…SSSS, LQPQ…HPSP, LQQS…QQQH, and PSLLQSVQVQS. Over residues 1090 to 1109 the composition is skewed to polar residues; the sequence is PLQTAQTQPGQHKVSMPSTK. A compositionally biased stretch (low complexity) spans 1110 to 1121; the sequence is AQQIIQQQQATQ. A C-terminal (CTD) region region spans residues 1126–1444; that stretch reads RQHKADSYNS…LMAIFEENLF (319 aa). Residues 1151-1163 are compositionally biased toward polar residues; sequence QIPQYSLVHQSPS. A compositionally biased stretch (basic and acidic residues) spans 1246–1255; sequence QDKEKFKQEP. The segment covering 1282 to 1296 has biased composition (low complexity); sequence SSTTPSSGLKSSSDS. Residues 1298-1357 show a composition bias toward basic and acidic residues; it reads EQFRRAAREKEEREKALKAQVEQAEKDRLRKEQEKLRGRDEEDSIEPPRRPLEEPRRRQE. A compositionally biased stretch (low complexity) spans 1367–1389; sequence QHQTQAQAQTLNPAQSPSASQPT. A compositionally biased stretch (basic and acidic residues) spans 1405 to 1422; it reads QQREMARRREQERRRREA.

The protein belongs to the BET family. In terms of tissue distribution, widely expressed.

It is found in the nucleus. Its subcellular location is the chromosome. In terms of biological role, chromatin reader protein that recognizes and binds acetylated histones and plays a key role in transmission of epigenetic memory across cell divisions and transcription regulation. Remains associated with acetylated chromatin throughout the entire cell cycle and provides epigenetic memory for postmitotic G1 gene transcription by preserving acetylated chromatin status and maintaining high-order chromatin structure. During interphase, plays a key role in regulating the transcription of signal-inducible genes by associating with the P-TEFb complex and recruiting it to promoters. The chain is Bromodomain-containing protein 4 (brd4) from Danio rerio (Zebrafish).